The following is a 196-amino-acid chain: MKIVLATGNAGKVRELSELLAGTGITILPQSDFGVPEAEENGLSFVENAILKARNAAAHTGLPAIADDSGIEVDALNGSPGIYSARYAGPGGDAEANNRKLLKALEHVESSQRTARFRCVMVYLRHADDPSPVIAEGSWEGRIASEARGPGGHGYDPIFEIPELELTAAEISPAEKNRRSHRGQALRILLERLQGR.

7–12 (TGNAGK) is a binding site for substrate. Mg(2+) is bound by residues E39 and D68. The Proton acceptor role is filled by D68. Residues S69, 153–156 (HGYD), K176, and 181–182 (HR) contribute to the substrate site.

Belongs to the HAM1 NTPase family. Homodimer. The cofactor is Mg(2+).

The catalysed reaction is XTP + H2O = XMP + diphosphate + H(+). It carries out the reaction dITP + H2O = dIMP + diphosphate + H(+). The enzyme catalyses ITP + H2O = IMP + diphosphate + H(+). Pyrophosphatase that catalyzes the hydrolysis of nucleoside triphosphates to their monophosphate derivatives, with a high preference for the non-canonical purine nucleotides XTP (xanthosine triphosphate), dITP (deoxyinosine triphosphate) and ITP. Seems to function as a house-cleaning enzyme that removes non-canonical purine nucleotides from the nucleotide pool, thus preventing their incorporation into DNA/RNA and avoiding chromosomal lesions. This is dITP/XTP pyrophosphatase from Thioalkalivibrio sulfidiphilus (strain HL-EbGR7).